We begin with the raw amino-acid sequence, 269 residues long: UPF0162 protein YchA (269 aa).

This sequence belongs to the UPF0162 family.

This chain is UPF0162 protein YchA (ychA), found in Escherichia coli O157:H7.